We begin with the raw amino-acid sequence, 275 residues long: Large ribosomal subunit protein uL2 (275 aa).

Positions 38–53 are enriched in polar residues; it reads SSKAGRNNNGRITTRH. Disordered regions lie at residues 38–60 and 224–257; these read SSKAGRNNNGRITTRHQGGGHKQ and AMNPIDHPHGGGEGRTAAGRDPVSPWGTPTKGFR.

Belongs to the universal ribosomal protein uL2 family. In terms of assembly, part of the 50S ribosomal subunit. Forms a bridge to the 30S subunit in the 70S ribosome.

Its function is as follows. One of the primary rRNA binding proteins. Required for association of the 30S and 50S subunits to form the 70S ribosome, for tRNA binding and peptide bond formation. It has been suggested to have peptidyltransferase activity; this is somewhat controversial. Makes several contacts with the 16S rRNA in the 70S ribosome. In Burkholderia pseudomallei (strain 1106a), this protein is Large ribosomal subunit protein uL2.